A 453-amino-acid chain; its full sequence is Aldehyde dehydrogenase, dimeric NADP-preferring (453 aa).

The residue at position 2 (S2) is an N-acetylserine. K178 is modified (N6-acetyllysine). Position 188-193 (188-193 (GSTGVG)) interacts with NAD(+). K194 bears the N6-acetyllysine mark. Catalysis depends on residues E210 and C244.

It belongs to the aldehyde dehydrogenase family. In terms of assembly, homodimer. As to expression, high levels in stomach, esophagus and lung; low level in the liver and kidney.

Its subcellular location is the cytoplasm. The catalysed reaction is an aldehyde + NAD(+) + H2O = a carboxylate + NADH + 2 H(+). The enzyme catalyses octanal + NAD(+) + H2O = octanoate + NADH + 2 H(+). In terms of biological role, ALDHs play a major role in the detoxification of alcohol-derived acetaldehyde. They are involved in the metabolism of corticosteroids, biogenic amines, neurotransmitters, and lipid peroxidation. Oxidizes medium and long chain aldehydes into non-toxic fatty acids. Preferentially oxidizes aromatic aldehyde substrates. Comprises about 50 percent of corneal epithelial soluble proteins. May play a role in preventing corneal damage caused by ultraviolet light. This chain is Aldehyde dehydrogenase, dimeric NADP-preferring (ALDH3A1), found in Homo sapiens (Human).